A 387-amino-acid chain; its full sequence is F-box protein DOR (387 aa).

The region spanning 19–64 is the F-box domain; sequence DENFEPIPIDLVIEIFSRSPVKSIARCRCVSKLWASILRLPYFTEL.

Part of a SCF (ASK-cullin-F-box) protein ligase complex. Interacts with ASK14 and CUL1. In terms of tissue distribution, strongly expressed in guard cells. Mostly represented in seedlings, leaves and flowers, and, to a lower extent, in roots and siliques.

It participates in protein modification; protein ubiquitination. In terms of biological role, component of SCF(ASK-cullin-F-box) E3 ubiquitin ligase complexes, which may mediate the ubiquitination and subsequent proteasomal degradation of target proteins. Negative regulator of guard cell abscisic acid (ABA) signaling, especially during drought stress. In Arabidopsis thaliana (Mouse-ear cress), this protein is F-box protein DOR (DOR).